The sequence spans 414 residues: Secernin-1 (414 aa).

The protein belongs to the peptidase C69 family. Secernin subfamily.

It is found in the cytoplasm. In terms of biological role, regulates exocytosis in mast cells. Increases both the extent of secretion and the sensitivity of mast cells to stimulation with calcium. The polypeptide is Secernin-1 (Scrn1) (Mus musculus (Mouse)).